Consider the following 34-residue polypeptide: Peptide 9797 (34 aa).

Expressed by the venom gland.

It is found in the secreted. The polypeptide is Peptide 9797 (Tityus stigmurus (Brazilian scorpion)).